The sequence spans 141 residues: Hemoglobin subunit alpha-1/2/3 (141 aa).

One can recognise a Globin domain in the interval 1–141; sequence VLSPADKTNV…VGTVLTSKYR (141 aa). At Ser3 the chain carries Phosphoserine. N6-succinyllysine is present on Lys7. Residue Thr8 is modified to Phosphothreonine. Lys11 carries the post-translational modification N6-succinyllysine. N6-acetyllysine; alternate is present on Lys16. An N6-succinyllysine; alternate modification is found at Lys16. A Phosphotyrosine modification is found at Tyr24. A Phosphoserine modification is found at Ser35. Position 40 is an N6-succinyllysine (Lys40). Position 49 is a phosphoserine (Ser49). His58 contributes to the O2 binding site. Position 87 (His87) interacts with heme b. Ser102 is modified (phosphoserine). Thr108 is subject to Phosphothreonine. Phosphoserine occurs at positions 124 and 131. Phosphothreonine occurs at positions 134 and 137. Ser138 is modified (phosphoserine).

Belongs to the globin family. In terms of assembly, heterotetramer of two alpha chains and two beta chains. As to expression, red blood cells.

Its function is as follows. Involved in oxygen transport from the lung to the various peripheral tissues. The polypeptide is Hemoglobin subunit alpha-1/2/3 (Macaca nemestrina (Pig-tailed macaque)).